The following is a 300-amino-acid chain: MTKHFTQIRDLGYQAAWDVLRRAKEMKDSRHRSTLLEGKSAIMLFEKASTRTRVSFETAVHQLGGKTIFMTPAESQLGRSEPLRDTARVLSRYNDLMIVRTFGQEKIDELVEYGSIPVINALTDEGHPCQVMSDMLTIYERTPDLEKVRVAWVGDGNNMANSWIEAAIFFKFELFMAFPEGYEPDRNLLALAMQAGAKIFLTHDPAMAVDGAHYVNTDVWASMGQEEEQKKREKAFAGFCVDDALMAKAAPDARFMHCLPAHRGEEVTEDVFESPASIVWDQAENRLHMQKALIEWVMEG.

Carbamoyl phosphate-binding positions include 49 to 52 (STRT), Q76, R100, and 127 to 130 (HPCQ). L-ornithine is bound by residues N158, D218, and 222–223 (SM). Carbamoyl phosphate is bound by residues 258-259 (CL) and R286.

It belongs to the aspartate/ornithine carbamoyltransferase superfamily. OTCase family.

Its subcellular location is the cytoplasm. It catalyses the reaction carbamoyl phosphate + L-ornithine = L-citrulline + phosphate + H(+). It participates in amino-acid biosynthesis; L-arginine biosynthesis; L-arginine from L-ornithine and carbamoyl phosphate: step 1/3. Reversibly catalyzes the transfer of the carbamoyl group from carbamoyl phosphate (CP) to the N(epsilon) atom of ornithine (ORN) to produce L-citrulline. This is Ornithine carbamoyltransferase from Oleidesulfovibrio alaskensis (strain ATCC BAA-1058 / DSM 17464 / G20) (Desulfovibrio alaskensis).